A 464-amino-acid polypeptide reads, in one-letter code: Heterogeneous nuclear ribonucleoprotein K (464 aa).

M1 is modified (N-acetylmethionine). Residues 1 to 37 are disordered; the sequence is METEQPEETFPNTETNGEFGKRPAEDMEEEQAFKRSR. Positions 1-276 are necessary for interaction with DDX1; it reads METEQPEETF…GRGGRPMPPS (276 aa). The span at 19–37 shows a compositional bias: basic and acidic residues; that stretch reads FGKRPAEDMEEEQAFKRSR. The residue at position 34 (K34) is an N6-acetyllysine; alternate. K34 is covalently cross-linked (Glycyl lysine isopeptide (Lys-Gly) (interchain with G-Cter in SUMO1); alternate). K34 participates in a covalent cross-link: Glycyl lysine isopeptide (Lys-Gly) (interchain with G-Cter in SUMO2); alternate. At S36 the chain carries Phosphoserine. T39 is modified (phosphothreonine). Residues 42 to 104 enclose the KH 1 domain; the sequence is MVELRILLQS…ETIGEILKKI (63 aa). Residues K52 and K60 each participate in a glycyl lysine isopeptide (Lys-Gly) (interchain with G-Cter in SUMO2) cross-link. 2 repeat units span residues 54–76 and 59–62. Positions 54–421 are 2 X 22 AA approximate repeats; that stretch reads AGAVIGKGGK…QIRHESGASI (368 aa). The tract at residues 59 to 407 is 5 X 4 AA repeats of G-X-G-G; it reads GKGGKNIKAL…LAGSIIGKGG (349 aa). A phosphoserine mark is found at S75 and S116. The region spanning 144-209 is the KH 2 domain; the sequence is DCELRLLIHQ…DRVVECIKII (66 aa). Residue K163 forms a Glycyl lysine isopeptide (Lys-Gly) (interchain with G-Cter in SUMO1); alternate linkage. Residue K163 forms a Glycyl lysine isopeptide (Lys-Gly) (interchain with G-Cter in SUMO2); alternate linkage. The residue at position 198 (K198) is an N6-acetyllysine. Phosphoserine occurs at positions 214 and 216. K219 is covalently cross-linked (Glycyl lysine isopeptide (Lys-Gly) (interchain with G-Cter in SUMO2); alternate). Position 219 is an N6-succinyllysine; alternate (K219). The RNA-binding RGG-box stretch occupies residues 236 to 273; the sequence is YGGFTMMFDDRRGRPVGFPMRGRGGFDRMPPGRGGRPM. Repeat copies occupy residues 245–250, 257–260, and 267–270. The tract at residues 245–329 is 2 X 6 AA approximate repeats; that stretch reads DRRGRPVGFP…LMAYDRRGRP (85 aa). Residues 250–329 form a disordered region; sequence PVGFPMRGRG…LMAYDRRGRP (80 aa). Residues 252-266 show a composition bias toward low complexity; that stretch reads GFPMRGRGGFDRMPP. Basic and acidic residues predominate over residues 276-285; that stretch reads SRRDYDDMSP. Phosphoserine is present on S284. The stretch at 295–298 is one 3-4 repeat; the sequence is GRGG. An Omega-N-methylarginine modification is found at R316. The stretch at 324–329 is one 2-2 repeat; sequence DRRGRP. Position 377 is an omega-N-methylarginine (R377). The residue at position 379 (S379) is a Phosphoserine. The residue at position 380 (Y380) is a Phosphotyrosine. Residues 387-451 form the KH 3 domain; that stretch reads IITTQVTIPK…DQIQNAQYLL (65 aa). Repeat copies occupy residues 399-421 and 404-407. K405 bears the N6-acetyllysine; alternate mark. Residue K405 forms a Glycyl lysine isopeptide (Lys-Gly) (interchain with G-Cter in SUMO2); alternate linkage. S420 carries the post-translational modification Phosphoserine. A Glycyl lysine isopeptide (Lys-Gly) (interchain with G-Cter in SUMO1); alternate cross-link involves residue K422. A Glycyl lysine isopeptide (Lys-Gly) (interchain with G-Cter in SUMO2); alternate cross-link involves residue K422. A Glycyl lysine isopeptide (Lys-Gly) (interchain with G-Cter in SUMO); alternate cross-link involves residue K422.

In terms of assembly, identified in the spliceosome C complex. Interacts with ANKRD28, RBM42 and ZIK1. Interacts with DDX1. Interacts with MDM2; this interaction leads to ubiquitination and proteasomal degradation. Interacts with p53/TP53. Interacts with BRDT. Interacts with IVNS1ABP. Interacts with PPIA/CYPA. Part of a transcription inhibitory ribonucleoprotein complex composed at least of the circular RNA circZNF827, ZNF827 and HNRNPL. Post-translationally, sumoylated by CBX4. Sumoylation is increased upon DNA damage, such as that produced by doxorubicin, etoposide, UV light and camptothecin, due to enhanced CBX4 phosphorylation by HIPK2 under these conditions. In terms of processing, ubiquitinated by MDM2. Doxorubicin treatment does not affect monoubiquitination, but slightly decreases HNRNPK poly-ubiquitination. O-glycosylated (O-GlcNAcylated), in a cell cycle-dependent manner.

The protein localises to the cytoplasm. It is found in the nucleus. Its subcellular location is the nucleoplasm. The protein resides in the cell projection. It localises to the podosome. One of the major pre-mRNA-binding proteins. Binds tenaciously to poly(C) sequences. Likely to play a role in the nuclear metabolism of hnRNAs, particularly for pre-mRNAs that contain cytidine-rich sequences. Can also bind poly(C) single-stranded DNA. Plays an important role in p53/TP53 response to DNA damage, acting at the level of both transcription activation and repression. When sumoylated, acts as a transcriptional coactivator of p53/TP53, playing a role in p21/CDKN1A and 14-3-3 sigma/SFN induction. As far as transcription repression is concerned, acts by interacting with long intergenic RNA p21 (lincRNA-p21), a non-coding RNA induced by p53/TP53. This interaction is necessary for the induction of apoptosis, but not cell cycle arrest. As part of a ribonucleoprotein complex composed at least of ZNF827, HNRNPL and the circular RNA circZNF827 that nucleates the complex on chromatin, may negatively regulate the transcription of genes involved in neuronal differentiation. This is Heterogeneous nuclear ribonucleoprotein K (HNRNPK) from Macaca fascicularis (Crab-eating macaque).